The sequence spans 478 residues: tRNA modification GTPase MnmE (478 aa).

(6S)-5-formyl-5,6,7,8-tetrahydrofolate contacts are provided by arginine 36, glutamate 94, and lysine 133. The TrmE-type G domain maps to 230-402 (GIHVVLAGRP…LVETLCAKVG (173 aa)). Asparagine 240 is a binding site for K(+). Residues 240–245 (NAGKSS), 259–265 (TDVAGTT), and 284–287 (DTAG) contribute to the GTP site. A Mg(2+)-binding site is contributed by serine 244. Residues threonine 259, valine 261, and threonine 264 each coordinate K(+). Residue threonine 265 participates in Mg(2+) binding. Residue lysine 478 participates in (6S)-5-formyl-5,6,7,8-tetrahydrofolate binding.

Belongs to the TRAFAC class TrmE-Era-EngA-EngB-Septin-like GTPase superfamily. TrmE GTPase family. As to quaternary structure, homodimer. Heterotetramer of two MnmE and two MnmG subunits. The cofactor is K(+).

The protein localises to the cytoplasm. In terms of biological role, exhibits a very high intrinsic GTPase hydrolysis rate. Involved in the addition of a carboxymethylaminomethyl (cmnm) group at the wobble position (U34) of certain tRNAs, forming tRNA-cmnm(5)s(2)U34. The polypeptide is tRNA modification GTPase MnmE (Psychrobacter arcticus (strain DSM 17307 / VKM B-2377 / 273-4)).